The primary structure comprises 473 residues: Photosystem II CP43 reaction center protein (473 aa).

The propeptide occupies 1-14 (MKTLYSLRRFYPVE). At Thr-15 the chain carries N-acetylthreonine. At Thr-15 the chain carries Phosphothreonine. 5 helical membrane passes run 69–93 (LFEVAHFVPEKPMYEQGLILLPHLA), 134–155 (LIGPETLEESFPFFGYVWKDRN), 178–200 (KALYFGGIYDTWAPGGGDVRKIT), 255–275 (KPFAWARRAFVWSGEAYLSYS), and 291–312 (WFNNTAYPSEFYGPTGPEASQA). Position 367 (Glu-367) interacts with [CaMn4O5] cluster. The chain crosses the membrane as a helical span at residues 447 to 471 (RARAAAAGFEKGIDRDFEPVLSMTP).

This sequence belongs to the PsbB/PsbC family. PsbC subfamily. As to quaternary structure, PSII is composed of 1 copy each of membrane proteins PsbA, PsbB, PsbC, PsbD, PsbE, PsbF, PsbH, PsbI, PsbJ, PsbK, PsbL, PsbM, PsbT, PsbX, PsbY, PsbZ, Psb30/Ycf12, at least 3 peripheral proteins of the oxygen-evolving complex and a large number of cofactors. It forms dimeric complexes. Requires Binds multiple chlorophylls and provides some of the ligands for the Ca-4Mn-5O cluster of the oxygen-evolving complex. It may also provide a ligand for a Cl- that is required for oxygen evolution. PSII binds additional chlorophylls, carotenoids and specific lipids. as cofactor.

It localises to the plastid. The protein localises to the chloroplast thylakoid membrane. Functionally, one of the components of the core complex of photosystem II (PSII). It binds chlorophyll and helps catalyze the primary light-induced photochemical processes of PSII. PSII is a light-driven water:plastoquinone oxidoreductase, using light energy to abstract electrons from H(2)O, generating O(2) and a proton gradient subsequently used for ATP formation. The polypeptide is Photosystem II CP43 reaction center protein (Cryptomeria japonica (Japanese cedar)).